Reading from the N-terminus, the 286-residue chain is Beta-lactamase SHV-34 (286 aa).

An N-terminal signal peptide occupies residues 1–21 (MRYFRLCIISLLATLPLAVHA). S66 acts as the Acyl-ester intermediate in catalysis. C73 and C119 form a disulfide bridge. E164 acts as the Proton acceptor in catalysis. 230 to 232 (KTG) contacts substrate.

The protein belongs to the class-A beta-lactamase family.

The enzyme catalyses a beta-lactam + H2O = a substituted beta-amino acid. In terms of biological role, hydrolyzes ceftazidime and cefotaxime. In Escherichia coli, this protein is Beta-lactamase SHV-34 (bla).